A 275-amino-acid polypeptide reads, in one-letter code: Small ribosomal subunit protein uS3 (275 aa).

In terms of domain architecture, KH type-2 spans 39-107 (VRIYLKKKLK…PVHVNIEEIR (69 aa)). The segment at 216 to 275 (AAATSAEPAAEEKKTRRAPSKTAARKPAAGTDKPLVAAKPAVKRVRKVETPAADTQKSGE) is disordered.

Belongs to the universal ribosomal protein uS3 family. As to quaternary structure, part of the 30S ribosomal subunit. Forms a tight complex with proteins S10 and S14.

In terms of biological role, binds the lower part of the 30S subunit head. Binds mRNA in the 70S ribosome, positioning it for translation. The chain is Small ribosomal subunit protein uS3 from Polynucleobacter asymbioticus (strain DSM 18221 / CIP 109841 / QLW-P1DMWA-1) (Polynucleobacter necessarius subsp. asymbioticus).